The primary structure comprises 411 residues: Multidrug resistance protein MdtG (411 aa).

A run of 10 helical transmembrane segments spans residues 14–34 (LFVA…IMPF), 56–76 (LVFS…GGLA), 89–109 (ALGM…WQFL), 113–133 (AVLG…ATQV), 144–164 (TLST…GLLA), 171–191 (PVFY…LLYV), 219–239 (ILSL…IAPI), 254–274 (LAFV…MSAP), 288–308 (ILVF…FVQT), and 376–396 (AVFC…WWCL).

The protein belongs to the major facilitator superfamily. DHA1 family. MdtG (TC 2.A.1.2.20) subfamily.

It localises to the cell inner membrane. The chain is Multidrug resistance protein MdtG from Serratia proteamaculans (strain 568).